We begin with the raw amino-acid sequence, 434 residues long: tRNA modification GTPase MnmE (434 aa).

R20, E79, and V119 together coordinate (6S)-5-formyl-5,6,7,8-tetrahydrofolate. The TrmE-type G domain maps to 219-361 (GLRVVLAGRP…LQEKLVEIGK (143 aa)). GTP is bound by residues 229-234 (NAGKST), 248-254 (APIAGTT), and 273-276 (DTAG). The Mg(2+) site is built by S233 and T254. K434 lines the (6S)-5-formyl-5,6,7,8-tetrahydrofolate pocket.

Belongs to the TRAFAC class TrmE-Era-EngA-EngB-Septin-like GTPase superfamily. TrmE GTPase family. As to quaternary structure, homodimer. Heterotetramer of two MnmE and two MnmG subunits. Requires K(+) as cofactor.

The protein resides in the cytoplasm. Its function is as follows. Exhibits a very high intrinsic GTPase hydrolysis rate. Involved in the addition of a carboxymethylaminomethyl (cmnm) group at the wobble position (U34) of certain tRNAs, forming tRNA-cmnm(5)s(2)U34. The sequence is that of tRNA modification GTPase MnmE from Zymomonas mobilis subsp. mobilis (strain ATCC 31821 / ZM4 / CP4).